Here is a 162-residue protein sequence, read N- to C-terminus: MSIILIGFMGAGKSTVAKLLAEEFTDLDKLIEEEIEMPIATFFELFGEADFRKIENEVFELAVQKDIIIATGGGIIENPKNLNVLDRASRVVFLTADFDTLWKRISMDWQNVRPLAQDKEAAQLLFEKRMKDYSLVADLTIDVTDKSPEQIAELIREKWEIE.

ATP is bound at residue 10–15; that stretch reads GAGKST. Serine 14 contacts Mg(2+). Residues aspartate 28, arginine 52, and glycine 73 each coordinate substrate. Arginine 113 lines the ATP pocket. Arginine 129 serves as a coordination point for substrate.

This sequence belongs to the shikimate kinase family. As to quaternary structure, monomer. Mg(2+) is required as a cofactor.

The protein resides in the cytoplasm. It catalyses the reaction shikimate + ATP = 3-phosphoshikimate + ADP + H(+). Its pathway is metabolic intermediate biosynthesis; chorismate biosynthesis; chorismate from D-erythrose 4-phosphate and phosphoenolpyruvate: step 5/7. Functionally, catalyzes the specific phosphorylation of the 3-hydroxyl group of shikimic acid using ATP as a cosubstrate. The protein is Shikimate kinase of Lactococcus lactis subsp. cremoris (strain SK11).